The following is a 273-amino-acid chain: MPLSDAPLGHNVAYPSEYNAALLFPIARAENRAGLGLDGALPFDGTDIWNAYELSWLDAKGKPRIAMASFRIPASSPNIIESKSFKLYLNSFNQTRLPNAQTLRDLLEKDLSAAAGAPVDMDFILPQRFDTLRIQELSGINLDKLDVEVDRYEPAPELLGCTGTGIIEETLMSRLLKSNCPVTGQPDWASVQIAYRGRPIDRAGLLKYIISFRQHAEFHEHCVERIFCDLMQACQPEQLTVYARYTRRGGLDINPWRSNAGASAPADLRGARQ.

80-82 (IES) provides a ligand contact to substrate. 82–83 (SK) contacts NADPH. The active-site Thioimide intermediate is the cysteine 180. The active-site Proton donor is the aspartate 187. Residue 219 to 220 (HE) participates in substrate binding. 248–249 (RG) is an NADPH binding site.

Belongs to the GTP cyclohydrolase I family. QueF type 2 subfamily. In terms of assembly, homodimer.

The protein localises to the cytoplasm. The catalysed reaction is 7-aminomethyl-7-carbaguanine + 2 NADP(+) = 7-cyano-7-deazaguanine + 2 NADPH + 3 H(+). It functions in the pathway tRNA modification; tRNA-queuosine biosynthesis. Catalyzes the NADPH-dependent reduction of 7-cyano-7-deazaguanine (preQ0) to 7-aminomethyl-7-deazaguanine (preQ1). In Bordetella avium (strain 197N), this protein is NADPH-dependent 7-cyano-7-deazaguanine reductase.